The following is a 418-amino-acid chain: Serine hydroxymethyltransferase (418 aa).

(6S)-5,6,7,8-tetrahydrofolate contacts are provided by residues L121 and 125 to 127; that span reads GHL. An N6-(pyridoxal phosphate)lysine modification is found at K230. (6S)-5,6,7,8-tetrahydrofolate is bound at residue 355-357; that stretch reads SPF.

Belongs to the SHMT family. In terms of assembly, homodimer. The cofactor is pyridoxal 5'-phosphate.

The protein localises to the cytoplasm. It carries out the reaction (6R)-5,10-methylene-5,6,7,8-tetrahydrofolate + glycine + H2O = (6S)-5,6,7,8-tetrahydrofolate + L-serine. The protein operates within one-carbon metabolism; tetrahydrofolate interconversion. It functions in the pathway amino-acid biosynthesis; glycine biosynthesis; glycine from L-serine: step 1/1. Functionally, catalyzes the reversible interconversion of serine and glycine with tetrahydrofolate (THF) serving as the one-carbon carrier. This reaction serves as the major source of one-carbon groups required for the biosynthesis of purines, thymidylate, methionine, and other important biomolecules. Also exhibits THF-independent aldolase activity toward beta-hydroxyamino acids, producing glycine and aldehydes, via a retro-aldol mechanism. This chain is Serine hydroxymethyltransferase, found in Streptococcus agalactiae serotype V (strain ATCC BAA-611 / 2603 V/R).